We begin with the raw amino-acid sequence, 92 residues long: DNA-directed RNA polymerase subunit Rpo11 (92 aa).

The protein belongs to the archaeal Rpo11/eukaryotic RPB11/RPC19 RNA polymerase subunit family. In terms of assembly, part of the 13-subunit RNA polymerase complex.

The protein localises to the cytoplasm. It catalyses the reaction RNA(n) + a ribonucleoside 5'-triphosphate = RNA(n+1) + diphosphate. DNA-dependent RNA polymerase (RNAP) catalyzes the transcription of DNA into RNA using the four ribonucleoside triphosphates as substrates. The sequence is that of DNA-directed RNA polymerase subunit Rpo11 from Saccharolobus shibatae (strain ATCC 51178 / DSM 5389 / JCM 8931 / NBRC 15437 / B12) (Sulfolobus shibatae).